Here is a 257-residue protein sequence, read N- to C-terminus: Large ribosomal subunit protein uL2 (257 aa).

Residues 207 to 257 are disordered; the sequence is VDHPHGGGNHQHVGHPTTLKRSSPPGQKAGKVAARRTGLIRGGNKEGAADN.

The protein belongs to the universal ribosomal protein uL2 family. In terms of assembly, component of the large ribosomal subunit.

The protein resides in the cytoplasm. In terms of biological role, component of the large ribosomal subunit. The ribosome is a large ribonucleoprotein complex responsible for the synthesis of proteins in the cell. The sequence is that of Large ribosomal subunit protein uL2 (RPL8) from Entamoeba histolytica (strain ATCC 30459 / HM-1:IMSS / ABRM).